The following is a 358-amino-acid chain: Carbamoyl phosphate synthase small chain (358 aa).

Residues 1 to 168 (MKRLLLLEDG…TKLAYASPGV (168 aa)) are CPSase. L-glutamine contacts are provided by S45, G219, and G221. Residues 171–357 (NIVLVDFGLK…INMIDDFQQK (187 aa)) form the Glutamine amidotransferase type-1 domain. C246 (nucleophile) is an active-site residue. L-glutamine is bound by residues M247, Q250, N288, G290, and Y291. Residues H330 and D332 contribute to the active site.

Belongs to the CarA family. Composed of two chains; the small (or glutamine) chain promotes the hydrolysis of glutamine to ammonia, which is used by the large (or ammonia) chain to synthesize carbamoyl phosphate. Tetramer of heterodimers (alpha,beta)4.

It carries out the reaction hydrogencarbonate + L-glutamine + 2 ATP + H2O = carbamoyl phosphate + L-glutamate + 2 ADP + phosphate + 2 H(+). It catalyses the reaction L-glutamine + H2O = L-glutamate + NH4(+). The protein operates within amino-acid biosynthesis; L-arginine biosynthesis; carbamoyl phosphate from bicarbonate: step 1/1. It functions in the pathway pyrimidine metabolism; UMP biosynthesis via de novo pathway; (S)-dihydroorotate from bicarbonate: step 1/3. Its function is as follows. Small subunit of the glutamine-dependent carbamoyl phosphate synthetase (CPSase). CPSase catalyzes the formation of carbamoyl phosphate from the ammonia moiety of glutamine, carbonate, and phosphate donated by ATP, constituting the first step of 2 biosynthetic pathways, one leading to arginine and/or urea and the other to pyrimidine nucleotides. The small subunit (glutamine amidotransferase) binds and cleaves glutamine to supply the large subunit with the substrate ammonia. This Streptococcus agalactiae serotype III (strain NEM316) protein is Carbamoyl phosphate synthase small chain.